Reading from the N-terminus, the 563-residue chain is Cystathionine gamma-synthase-like protein ankD (563 aa).

The segment at 1–37 is disordered; sequence MGELGPASAQHGSDSISFSGSYTQPLGAPQPPNEPHA. Polar residues predominate over residues 10 to 24; that stretch reads QHGSDSISFSGSYTQ.

It belongs to the trans-sulfuration enzymes family. MET7 subfamily. Pyridoxal 5'-phosphate serves as cofactor.

The catalysed reaction is cyclo(L-arginyl-(Z)-dehydro-3,4-dihydroxytyrosyl) + O-acetyl-L-homoserine = cyclo(L-arginyl-(Z)-dehydro-4-O-homoseryl-tyrosyl) + acetate + H(+). It participates in secondary metabolite biosynthesis. Functionally, cystathionine gamma-synthase-like protein; part of the ank cluster that mediates the biosynthesis of NK13650 C, a highly modified cyclo-arginine-tyrosine dipeptide. AnkD catalyzes the attachment of L-homoserine moiety using O-acetyl-L-homoserine as co-substrate. Within the pathway, the cyclodipeptide synthase ankA acts as the scaffold-generating enzyme and is responsible for formation of the cyclo-Arg-Tyr diketopiperazine (cRY) from L-Arg and L-Tyr. The ankA product cRY is desaturated by the cytochrome P450 monooxygenase ankB to yield a dehydro-cyclodipeptide intermediate. The FAD-dependent monooxygenase ankC then installs the m-OH, ankD catalyzes the attachment of L-homoserine, and ankE ligates citrate to the ankD product to yield NK13650 B. The O-methyltransferase ankF is responsible for methylation of the C-17 phenol group of NK13650 B to produce NK13650 D. Amidation of NK13650 D with L-Asp by ankG then leads to the production of NK13650 C, whereas amidation of NK13650 B produces NK13650 A. In Aspergillus thermomutatus (Neosartorya pseudofischeri), this protein is Cystathionine gamma-synthase-like protein ankD.